The chain runs to 609 residues: Pentatricopeptide repeat-containing protein At5g13770, chloroplastic (609 aa).

The transit peptide at methionine 1–arginine 44 directs the protein to the chloroplast. 13 PPR repeats span residues glutamate 103–proline 137, aspartate 138–aspartate 168, alanine 172–proline 207, serine 208–phenylalanine 242, serine 247–glutamate 281, serine 282–lysine 316, aspartate 317–valine 351, threonine 352–alanine 386, glycine 387–lysine 421, cysteine 422–proline 456, asparagine 457–proline 491, aspartate 492–isoleucine 526, and aspartate 527–leucine 561.

This sequence belongs to the PPR family. P subfamily.

The protein resides in the plastid. It is found in the chloroplast. The polypeptide is Pentatricopeptide repeat-containing protein At5g13770, chloroplastic (Arabidopsis thaliana (Mouse-ear cress)).